Reading from the N-terminus, the 96-residue chain is Co-chaperonin GroES (96 aa).

The protein belongs to the GroES chaperonin family. As to quaternary structure, heptamer of 7 subunits arranged in a ring. Interacts with the chaperonin GroEL.

It localises to the cytoplasm. Functionally, together with the chaperonin GroEL, plays an essential role in assisting protein folding. The GroEL-GroES system forms a nano-cage that allows encapsulation of the non-native substrate proteins and provides a physical environment optimized to promote and accelerate protein folding. GroES binds to the apical surface of the GroEL ring, thereby capping the opening of the GroEL channel. This Teredinibacter turnerae (strain ATCC 39867 / T7901) protein is Co-chaperonin GroES.